The sequence spans 210 residues: Outer-membrane lipoprotein LolB (210 aa).

A signal peptide spans 1–19 (MNHLKSFFTALVAGFILTA). A lipid anchor (N-palmitoyl cysteine) is attached at C20. C20 carries S-diacylglycerol cysteine lipidation.

It belongs to the LolB family. Monomer.

It localises to the cell outer membrane. Plays a critical role in the incorporation of lipoproteins in the outer membrane after they are released by the LolA protein. This is Outer-membrane lipoprotein LolB from Mannheimia succiniciproducens (strain KCTC 0769BP / MBEL55E).